We begin with the raw amino-acid sequence, 99 residues long: DNA-directed RNA polymerase subunit omega (99 aa).

Positions 1-10 are enriched in low complexity; sequence MSSTSAASAA. Residues 1–20 are disordered; that stretch reads MSSTSAASAAGQGALPAYDT.

It belongs to the RNA polymerase subunit omega family. The RNAP catalytic core consists of 2 alpha, 1 beta, 1 beta' and 1 omega subunit. When a sigma factor is associated with the core the holoenzyme is formed, which can initiate transcription.

It carries out the reaction RNA(n) + a ribonucleoside 5'-triphosphate = RNA(n+1) + diphosphate. Its function is as follows. Promotes RNA polymerase assembly. Latches the N- and C-terminal regions of the beta' subunit thereby facilitating its interaction with the beta and alpha subunits. The polypeptide is DNA-directed RNA polymerase subunit omega (Rhodococcus erythropolis (strain PR4 / NBRC 100887)).